The sequence spans 357 residues: tRNA N6-adenosine threonylcarbamoyltransferase (357 aa).

Residues His120 and His124 each contribute to the Fe cation site. Substrate-binding positions include 143–147 (LVSGG), Asp176, Gly189, and Asn289. Fe cation is bound at residue Asp317.

The protein belongs to the KAE1 / TsaD family. Fe(2+) serves as cofactor.

The protein localises to the cytoplasm. The enzyme catalyses L-threonylcarbamoyladenylate + adenosine(37) in tRNA = N(6)-L-threonylcarbamoyladenosine(37) in tRNA + AMP + H(+). Functionally, required for the formation of a threonylcarbamoyl group on adenosine at position 37 (t(6)A37) in tRNAs that read codons beginning with adenine. Is involved in the transfer of the threonylcarbamoyl moiety of threonylcarbamoyl-AMP (TC-AMP) to the N6 group of A37, together with TsaE and TsaB. TsaD likely plays a direct catalytic role in this reaction. This Polynucleobacter asymbioticus (strain DSM 18221 / CIP 109841 / QLW-P1DMWA-1) (Polynucleobacter necessarius subsp. asymbioticus) protein is tRNA N6-adenosine threonylcarbamoyltransferase.